Consider the following 407-residue polypeptide: Transcriptional regulator UL34 (407 aa).

2 disordered regions span residues 268 to 330 (AAGP…EELF) and 388 to 407 (SPSVTPALTPVTSPITPLCI). The segment covering 273 to 286 (EADENNDEGEEDDD) has biased composition (acidic residues). The span at 287–301 (ELRHSDPAPLHESKK) shows a compositional bias: basic and acidic residues. Basic residues predominate over residues 302-312 (PRNARRPRTRV).

It belongs to the HHV-5 UL34 protein family.

Its subcellular location is the host nucleus. Its function is as follows. Acts as a transcriptional repressor of the US3 gene expression through a specific DNA sequence named the transcriptional repressive element (tre). This Human cytomegalovirus (strain Towne) (HHV-5) protein is Transcriptional regulator UL34 (UL34).